Reading from the N-terminus, the 431-residue chain is TDP-daunosamine transferase DnrS (431 aa).

Residues 1 to 23 (MKVLVTAFAMDAHFNGVVPLAWA) form the signal peptide.

The protein belongs to the glycosyltransferase 28 family.

It carries out the reaction dTDP-beta-L-daunosamine + epsilon-rhodomycinone = rhodomycin D + dTDP + H(+). It participates in antibiotic biosynthesis; daunorubicin biosynthesis. The protein operates within antibiotic biosynthesis; carminomycin biosynthesis. Functionally, involved in the biosynthesis of the anthracyclines carminomycin and daunorubicin (daunomycin) which are aromatic polyketide antibiotics that exhibit high cytotoxicity and are widely applied in the chemotherapy of a variety of cancers. Catalyzes the addition of the TDP activated glycoside, L-daunosamine-TDP (2,3,6-trideoxy-3-aminohexose-TDP) at position C-7 of epsilon-rhodomycinone to yield rhodomycin D. Glycosylation is a prerequisite for biological activity of anthracyclines and requires DnrQ which seems to act as an activator. In Streptomyces peucetius, this protein is TDP-daunosamine transferase DnrS (dnrS).